The following is a 157-amino-acid chain: MSVEVNNESGVELPEAELVRLSRFVFEKLYLHPQTELSIILADREAMEKLHVEWMYEPGATDVLSFPMDELRPGTVSRPAPAGLLGDIVICPQVAQEQAQAGGHSVEDELLLLTTHGLLHLLGYDHEDPEEKAEMFGLQRELLTSFLGRDAPAETTA.

Residues His116, His120, and His126 each coordinate Zn(2+).

Belongs to the endoribonuclease YbeY family. Zn(2+) is required as a cofactor.

It localises to the cytoplasm. Its function is as follows. Single strand-specific metallo-endoribonuclease involved in late-stage 70S ribosome quality control and in maturation of the 3' terminus of the 16S rRNA. In Renibacterium salmoninarum (strain ATCC 33209 / DSM 20767 / JCM 11484 / NBRC 15589 / NCIMB 2235), this protein is Endoribonuclease YbeY.